The primary structure comprises 539 residues: GMP synthase [glutamine-hydrolyzing] (539 aa).

The Glutamine amidotransferase type-1 domain occupies 4–202 (KILILDFGSQ…VLQIAGAKPD (199 aa)). Cys-81 acts as the Nucleophile in catalysis. Residues His-176 and Glu-178 contribute to the active site. One can recognise a GMPS ATP-PPase domain in the interval 203-395 (WIMSNHIEEA…LGLPPEMVYR (193 aa)). 230 to 236 (SGGVDSS) contributes to the ATP binding site.

Homodimer.

The enzyme catalyses XMP + L-glutamine + ATP + H2O = GMP + L-glutamate + AMP + diphosphate + 2 H(+). Its pathway is purine metabolism; GMP biosynthesis; GMP from XMP (L-Gln route): step 1/1. Catalyzes the synthesis of GMP from XMP. The polypeptide is GMP synthase [glutamine-hydrolyzing] (Burkholderia ambifaria (strain ATCC BAA-244 / DSM 16087 / CCUG 44356 / LMG 19182 / AMMD) (Burkholderia cepacia (strain AMMD))).